The chain runs to 377 residues: Transmembrane 6 superfamily member 2 (377 aa).

A run of 9 helical transmembrane segments spans residues 10 to 30 (IAAL…VSAL), 34 to 54 (LWVA…VYSL), 63 to 83 (PLYA…IIAL), 111 to 131 (FICY…AGAI), 140 to 160 (FGLY…TGNI), 170 to 190 (PAFF…MKVF), 219 to 239 (LALV…GLVV), 269 to 289 (MLMY…ALTF), and 332 to 352 (TWGC…LLAY). EXPERA domains follow at residues 61-186 (YDPL…CWAG) and 217-351 (ADLA…HLLA).

The protein belongs to the TM6SF family. In terms of tissue distribution, substantial expression in liver and intestine, whereas all other tissues analyzed show low levels.

The protein resides in the endoplasmic reticulum membrane. The protein localises to the endoplasmic reticulum-Golgi intermediate compartment membrane. Regulator of liver fat metabolism influencing triglyceride secretion and hepatic lipid droplet content. May function as sterol isomerase. This chain is Transmembrane 6 superfamily member 2 (TM6SF2), found in Homo sapiens (Human).